The following is a 419-amino-acid chain: Methionine aminopeptidase 2 (419 aa).

The segment at 1–69 is disordered; it reads MSTNSSNPNE…KITAIDNSYP (69 aa). Over residues 11 to 29 the composition is skewed to basic and acidic residues; that stretch reads VMEKVQDLKIDDSKPKVDS. Residues 30 to 41 show a composition bias toward acidic residues; it reads EEQPEAESDGES. Residues 48–61 are compositionally biased toward basic residues; that stretch reads KKKKKKKSKKKKKI. H172 contributes to the substrate binding site. The a divalent metal cation site is built by D192, D203, and H272. H280 serves as a coordination point for substrate. E305 and E400 together coordinate a divalent metal cation.

It belongs to the peptidase M24A family. Methionine aminopeptidase eukaryotic type 2 subfamily. The cofactor is Co(2+). Requires Zn(2+) as cofactor. Mn(2+) is required as a cofactor. Fe(2+) serves as cofactor.

The protein localises to the cytoplasm. The enzyme catalyses Release of N-terminal amino acids, preferentially methionine, from peptides and arylamides.. Cotranslationally removes the N-terminal methionine from nascent proteins. The N-terminal methionine is often cleaved when the second residue in the primary sequence is small and uncharged (Met-Ala-, Cys, Gly, Pro, Ser, Thr, or Val). This Debaryomyces hansenii (strain ATCC 36239 / CBS 767 / BCRC 21394 / JCM 1990 / NBRC 0083 / IGC 2968) (Yeast) protein is Methionine aminopeptidase 2.